Here is a 239-residue protein sequence, read N- to C-terminus: Probable transcriptional regulatory protein Pnuc_0618 (239 aa).

Residues 1 to 21 (MAGHSKWANIQHRKGRQDEKR) form a disordered region.

This sequence belongs to the TACO1 family.

It localises to the cytoplasm. The polypeptide is Probable transcriptional regulatory protein Pnuc_0618 (Polynucleobacter asymbioticus (strain DSM 18221 / CIP 109841 / QLW-P1DMWA-1) (Polynucleobacter necessarius subsp. asymbioticus)).